Consider the following 258-residue polypeptide: MSTLLDKTRKLNKILQKSGVEPVVFDDICKILSEVLGCNVYVISRKGKVLGYNFPDGFECSTVKNKIISEMRFPEQYNNKLLNAHETLPNLSNHGICVFEDGTPCDLEDKVTTIVPIIGNRERLGTLLLASFGEKFTDEDLVLGEYSATIVGLEILKSKNDEIEEEARKKAVVQLAIGTLSYSELEAVEHIFNELDGKEGLLVASKIADKVGITRSVIVNALRKFESAGVIESRSLGMKGTHIKILNDKLLDELKKIK.

The segment at 1–156 is GAF domain; it reads MSTLLDKTRK…SATIVGLEIL (156 aa). Residues 204–223 constitute a DNA-binding region (H-T-H motif); sequence ASKIADKVGITRSVIVNALR.

The protein belongs to the CodY family.

The protein resides in the cytoplasm. Its function is as follows. DNA-binding global transcriptional regulator which is involved in the adaptive response to starvation and acts by directly or indirectly controlling the expression of numerous genes in response to nutrient availability. During rapid exponential growth, CodY is highly active and represses genes whose products allow adaptation to nutrient depletion. The protein is Global transcriptional regulator CodY of Clostridium kluyveri (strain NBRC 12016).